The following is a 202-amino-acid chain: Peptidyl-tRNA hydrolase (202 aa).

Tyr19 lines the tRNA pocket. His24 functions as the Proton acceptor in the catalytic mechanism. Residues Tyr70, Asn72, and Asn118 each coordinate tRNA.

It belongs to the PTH family. Monomer.

Its subcellular location is the cytoplasm. The catalysed reaction is an N-acyl-L-alpha-aminoacyl-tRNA + H2O = an N-acyl-L-amino acid + a tRNA + H(+). Hydrolyzes ribosome-free peptidyl-tRNAs (with 1 or more amino acids incorporated), which drop off the ribosome during protein synthesis, or as a result of ribosome stalling. Functionally, catalyzes the release of premature peptidyl moieties from peptidyl-tRNA molecules trapped in stalled 50S ribosomal subunits, and thus maintains levels of free tRNAs and 50S ribosomes. In Prochlorococcus marinus (strain NATL2A), this protein is Peptidyl-tRNA hydrolase.